Reading from the N-terminus, the 88-residue chain is Small ribosomal subunit protein bS20 (88 aa).

A disordered region spans residues 69–88 (KNTASRKKSRLTKRFNKLTG). Positions 71–88 (TASRKKSRLTKRFNKLTG) are enriched in basic residues.

This sequence belongs to the bacterial ribosomal protein bS20 family.

Its function is as follows. Binds directly to 16S ribosomal RNA. This Pelotomaculum thermopropionicum (strain DSM 13744 / JCM 10971 / SI) protein is Small ribosomal subunit protein bS20.